The chain runs to 155 residues: MSIKTIEGTLEATNLKFALVVSRFNDFIGQKLVEGAVDCIVRHGGSEENIAVYKCPGAFELPAVAKKAALTGRYDAVITLGAIIRGSTSHYDVIAAEATKGVAQAGLETMIPITFGVLTTENLEQAIERAGTKAGNKGFDAALAAIEMVNLYRQV.

5-amino-6-(D-ribitylamino)uracil-binding positions include Phe24, 58–60 (AFE), and 82–84 (AII). 87–88 (ST) is a (2S)-2-hydroxy-3-oxobutyl phosphate binding site. The Proton donor role is filled by His90. Position 115 (Phe115) interacts with 5-amino-6-(D-ribitylamino)uracil. Arg129 contributes to the (2S)-2-hydroxy-3-oxobutyl phosphate binding site.

Belongs to the DMRL synthase family.

The enzyme catalyses (2S)-2-hydroxy-3-oxobutyl phosphate + 5-amino-6-(D-ribitylamino)uracil = 6,7-dimethyl-8-(1-D-ribityl)lumazine + phosphate + 2 H2O + H(+). It functions in the pathway cofactor biosynthesis; riboflavin biosynthesis; riboflavin from 2-hydroxy-3-oxobutyl phosphate and 5-amino-6-(D-ribitylamino)uracil: step 1/2. Its function is as follows. Catalyzes the formation of 6,7-dimethyl-8-ribityllumazine by condensation of 5-amino-6-(D-ribitylamino)uracil with 3,4-dihydroxy-2-butanone 4-phosphate. This is the penultimate step in the biosynthesis of riboflavin. This is 6,7-dimethyl-8-ribityllumazine synthase from Chlorobium phaeobacteroides (strain BS1).